The following is a 312-amino-acid chain: Calcium-independent mitochondrial carrier protein SCaMC-3L (312 aa).

3 Solcar repeats span residues 27–113, 121–206, and 217–304; these read GTLW…SKNF, QLFQ…LQCL, and PSGL…MKKT. 6 helical membrane passes run 33–50, 88–107, 131–144, 182–200, 219–243, and 279–298; these read LLSG…TAPL, GNGI…FSVC, SLAV…INPM, YLPN…LAVY, GLVS…LTLV, and GMTP…YLVY.

Belongs to the mitochondrial carrier (TC 2.A.29) family. In terms of tissue distribution, mainly expressed in testis and at lesser levels in brain.

The protein resides in the mitochondrion inner membrane. It carries out the reaction Mg(2+)(out) + phosphate(in) + ATP(out) = Mg(2+)(in) + phosphate(out) + ATP(in). The catalysed reaction is ADP(out) + phosphate(in) + H(+)(out) = ADP(in) + phosphate(out) + H(+)(in). In terms of biological role, calcium-independent ATP-Mg/Pi exchanger that catalyzes the electroneutral exchange of Mg-ATP or free ADP against an hydrogenphosphate and participates in the net transport of adenine nucleotides across the mitochondria inner membrane. This Mus musculus (Mouse) protein is Calcium-independent mitochondrial carrier protein SCaMC-3L.